The sequence spans 382 residues: Galactokinase (382 aa).

34–37 (EHTD) contacts substrate. 124 to 130 (GAGLSSS) contacts ATP. Mg(2+)-binding residues include Ser130 and Glu162. Catalysis depends on Asp174, which acts as the Proton acceptor. Residue Tyr223 coordinates substrate.

It belongs to the GHMP kinase family. GalK subfamily.

It localises to the cytoplasm. The enzyme catalyses alpha-D-galactose + ATP = alpha-D-galactose 1-phosphate + ADP + H(+). It functions in the pathway carbohydrate metabolism; galactose metabolism. In terms of biological role, catalyzes the transfer of the gamma-phosphate of ATP to D-galactose to form alpha-D-galactose-1-phosphate (Gal-1-P). The polypeptide is Galactokinase (Salmonella paratyphi B (strain ATCC BAA-1250 / SPB7)).